The chain runs to 124 residues: Small ribosomal subunit protein uS13 (124 aa).

Residues 98–124 (VRGQRTKTNARTRKGPKRTIAGKKKAR) are disordered.

Belongs to the universal ribosomal protein uS13 family. Part of the 30S ribosomal subunit. Forms a loose heterodimer with protein S19. Forms two bridges to the 50S subunit in the 70S ribosome.

In terms of biological role, located at the top of the head of the 30S subunit, it contacts several helices of the 16S rRNA. In the 70S ribosome it contacts the 23S rRNA (bridge B1a) and protein L5 of the 50S subunit (bridge B1b), connecting the 2 subunits; these bridges are implicated in subunit movement. Contacts the tRNAs in the A and P-sites. This is Small ribosomal subunit protein uS13 from Mycobacterium leprae (strain Br4923).